The chain runs to 609 residues: Glutamine--fructose-6-phosphate aminotransferase [isomerizing] (609 aa).

Catalysis depends on C2, which acts as the Nucleophile; for GATase activity. Residues 2 to 218 (CGIVGAVAQR…EGDVVEVTRR (217 aa)) form the Glutamine amidotransferase type-2 domain. SIS domains are found at residues 286–426 (ADAL…LKGA) and 458–599 (LAEG…VDQP). Catalysis depends on K604, which acts as the For Fru-6P isomerization activity.

Homodimer.

It is found in the cytoplasm. The enzyme catalyses D-fructose 6-phosphate + L-glutamine = D-glucosamine 6-phosphate + L-glutamate. Functionally, catalyzes the first step in hexosamine metabolism, converting fructose-6P into glucosamine-6P using glutamine as a nitrogen source. This chain is Glutamine--fructose-6-phosphate aminotransferase [isomerizing], found in Yersinia pestis.